The sequence spans 159 residues: NADH-quinone oxidoreductase subunit B 2 (159 aa).

[4Fe-4S] cluster contacts are provided by Cys-37, Cys-38, Cys-102, and Cys-132.

It belongs to the complex I 20 kDa subunit family. NDH-1 is composed of 14 different subunits. Subunits NuoB, C, D, E, F, and G constitute the peripheral sector of the complex. [4Fe-4S] cluster is required as a cofactor.

Its subcellular location is the cell inner membrane. It catalyses the reaction a quinone + NADH + 5 H(+)(in) = a quinol + NAD(+) + 4 H(+)(out). In terms of biological role, NDH-1 shuttles electrons from NADH, via FMN and iron-sulfur (Fe-S) centers, to quinones in the respiratory chain. Couples the redox reaction to proton translocation (for every two electrons transferred, four hydrogen ions are translocated across the cytoplasmic membrane), and thus conserves the redox energy in a proton gradient. This Azoarcus sp. (strain BH72) protein is NADH-quinone oxidoreductase subunit B 2.